We begin with the raw amino-acid sequence, 68 residues long: Large ribosomal subunit protein uL29 (68 aa).

This sequence belongs to the universal ribosomal protein uL29 family.

This chain is Large ribosomal subunit protein uL29, found in Chloroflexus aurantiacus (strain ATCC 29364 / DSM 637 / Y-400-fl).